We begin with the raw amino-acid sequence, 150 residues long: Large ribosomal subunit protein uL15 (150 aa).

Positions 1-49 are disordered; the sequence is MELHQLKSVSKSRNHKSKVVGRGHGSGLGKTSSRGQKGQKARKSGLTRL. The segment covering 10-21 has biased composition (basic residues); the sequence is SKSRNHKSKVVG.

The protein belongs to the universal ribosomal protein uL15 family. Part of the 50S ribosomal subunit.

Its function is as follows. Binds to the 23S rRNA. The polypeptide is Large ribosomal subunit protein uL15 (Mycoplasma genitalium (strain ATCC 33530 / DSM 19775 / NCTC 10195 / G37) (Mycoplasmoides genitalium)).